The following is a 129-amino-acid chain: Small ribosomal subunit protein uS11 (129 aa).

Belongs to the universal ribosomal protein uS11 family. Part of the 30S ribosomal subunit. Interacts with proteins S7 and S18. Binds to IF-3.

Its function is as follows. Located on the platform of the 30S subunit, it bridges several disparate RNA helices of the 16S rRNA. Forms part of the Shine-Dalgarno cleft in the 70S ribosome. The chain is Small ribosomal subunit protein uS11 from Jannaschia sp. (strain CCS1).